We begin with the raw amino-acid sequence, 627 residues long: Carnitine O-acetyltransferase, mitochondrial (627 aa).

Residue histidine 336 is the Proton acceptor of the active site. Residues lysine 418 and 422 to 429 (KKFKVSPD) contribute to the CoA site. Residues tyrosine 451, serine 453, and threonine 464 each contribute to the (R)-carnitine site. Glutamine 553 is a binding site for CoA. The Microbody targeting signal motif lies at 625–627 (PKL).

It belongs to the carnitine/choline acetyltransferase family.

It localises to the peroxisome. The protein localises to the mitochondrion inner membrane. The catalysed reaction is (R)-carnitine + acetyl-CoA = O-acetyl-(R)-carnitine + CoA. In terms of biological role, carnitine acetylase is specific for short chain fatty acids. Carnitine acetylase seems to affect the flux through the pyruvate dehydrogenase complex. It may be involved as well in the transport of acetyl-CoA into mitochondria. The sequence is that of Carnitine O-acetyltransferase, mitochondrial (CAT2) from Candida tropicalis (Yeast).